An 84-amino-acid chain; its full sequence is Toxin Aah4 (84 aa).

Residues 1 to 19 (MNYLIMFSLALLLVIGVES) form the signal peptide. Positions 21–82 (RDGYIVDSKN…PIKDPSDDCH (62 aa)) constitute an LCN-type CS-alpha/beta domain. Intrachain disulfides connect C31–C81, C35–C53, C39–C63, and C43–C65. Position 84 (R84) is a propeptide, removed by a carboxypeptidase.

Belongs to the long (4 C-C) scorpion toxin superfamily. Sodium channel inhibitor family. Alpha subfamily. In terms of tissue distribution, expressed by the venom gland.

The protein resides in the secreted. Functionally, alpha toxins bind voltage-independently at site-3 of sodium channels (Nav) and inhibit the inactivation of the activated channels, thereby blocking neuronal transmission. This toxin seems to specifically act on Nav1.6/SCN8A sodium channel. In vitro, it inhibits the proliferation of the prostate cancer cell line DU145 (IC(50)=15 uM). It shows low effect on the adhesion of DU145 cells to fibronectin (at 15 uM) and is inactive on DU145 cells migration. In Androctonus australis (Sahara scorpion), this protein is Toxin Aah4.